A 274-amino-acid polypeptide reads, in one-letter code: Ribosomal RNA small subunit methyltransferase A (274 aa).

Positions 15, 17, 42, 64, 89, and 108 each coordinate S-adenosyl-L-methionine.

It belongs to the class I-like SAM-binding methyltransferase superfamily. rRNA adenine N(6)-methyltransferase family. RsmA subfamily.

It is found in the cytoplasm. It catalyses the reaction adenosine(1518)/adenosine(1519) in 16S rRNA + 4 S-adenosyl-L-methionine = N(6)-dimethyladenosine(1518)/N(6)-dimethyladenosine(1519) in 16S rRNA + 4 S-adenosyl-L-homocysteine + 4 H(+). Specifically dimethylates two adjacent adenosines (A1518 and A1519) in the loop of a conserved hairpin near the 3'-end of 16S rRNA in the 30S particle. May play a critical role in biogenesis of 30S subunits. The chain is Ribosomal RNA small subunit methyltransferase A from Prochlorococcus marinus (strain MIT 9301).